Consider the following 171-residue polypeptide: MKKPTSAAGAKRPTKAHRKTREELNQEARDRKRVKKHSGHSAGSRANGSSASGSTAQNSKQKDPRIGSKTPIPLGVTDTPVVKQHKPKSEKPMLSPQAELDMLENDERLDALLERLEAGEKLNAEEQKWVDAKLDRIDELMQQLGLSYEDDEDDEEEEKQDDMMRLLKGGN.

Disordered stretches follow at residues 1-99 (MKKP…PQAE) and 145-171 (GLSY…KGGN). Over residues 20 to 30 (TREELNQEARD) the composition is skewed to basic and acidic residues. The span at 40–59 (HSAGSRANGSSASGSTAQNS) shows a compositional bias: low complexity. The segment covering 148-160 (YEDDEDDEEEEKQ) has biased composition (acidic residues).

It belongs to the YihI family. As to quaternary structure, interacts with Der.

Its function is as follows. A GTPase-activating protein (GAP) that modifies Der/EngA GTPase function. May play a role in ribosome biogenesis. This is Der GTPase-activating protein YihI from Enterobacter sp. (strain 638).